A 249-amino-acid chain; its full sequence is MNYRDELILQWVNQQGKASVIELAQHCDISVETIRRDLNKLANKGLLHRTHGGAVSNKTKDLGSFFQTRKHINATAKRHIAQKALDLLYENAVIGLDASSTSWYFAYLMPDIPCTVVTNSMFNINALVNKSNVKTIVTGGVYSAKYEAFYGPLSEYLLQRLHINFSVFSCSGIDKNGNIWESNELNASLKRKMMEASERAYLLIDSSKFEKTSLIQLADLSKINTIFSDRSLPDNLQKYCEQHDIMTVL.

The 56-residue stretch at 1-56 (MNYRDELILQWVNQQGKASVIELAQHCDISVETIRRDLNKLANKGLLHRTHGGAVS) folds into the HTH deoR-type domain. A DNA-binding region (H-T-H motif) is located at residues 18-37 (ASVIELAQHCDISVETIRRD).

Functionally, transcriptional activator of the fuc operon. The sequence is that of L-fucose operon activator (fucR) from Haemophilus influenzae (strain ATCC 51907 / DSM 11121 / KW20 / Rd).